A 338-amino-acid polypeptide reads, in one-letter code: Glycerol-3-phosphate dehydrogenase [NAD(P)+] (338 aa).

NADPH is bound by residues Trp-12, His-33, and Lys-110. 3 residues coordinate sn-glycerol 3-phosphate: Lys-110, Gly-142, and Ser-144. Ala-146 is a binding site for NADPH. 5 residues coordinate sn-glycerol 3-phosphate: Lys-197, Asp-250, Ser-260, Arg-261, and Asn-262. Residue Lys-197 is the Proton acceptor of the active site. Position 261 (Arg-261) interacts with NADPH. Val-286 and Glu-288 together coordinate NADPH.

This sequence belongs to the NAD-dependent glycerol-3-phosphate dehydrogenase family.

The protein resides in the cytoplasm. The catalysed reaction is sn-glycerol 3-phosphate + NAD(+) = dihydroxyacetone phosphate + NADH + H(+). It catalyses the reaction sn-glycerol 3-phosphate + NADP(+) = dihydroxyacetone phosphate + NADPH + H(+). Its pathway is membrane lipid metabolism; glycerophospholipid metabolism. Its function is as follows. Catalyzes the reduction of the glycolytic intermediate dihydroxyacetone phosphate (DHAP) to sn-glycerol 3-phosphate (G3P), the key precursor for phospholipid synthesis. The chain is Glycerol-3-phosphate dehydrogenase [NAD(P)+] from Acidobacterium capsulatum (strain ATCC 51196 / DSM 11244 / BCRC 80197 / JCM 7670 / NBRC 15755 / NCIMB 13165 / 161).